We begin with the raw amino-acid sequence, 96 residues long: Large ribosomal subunit protein bL27 (96 aa).

Residues 1 to 9 (MLRLDLQFF) constitute a propeptide that is removed on maturation.

The protein belongs to the bacterial ribosomal protein bL27 family. The N-terminus is cleaved by ribosomal processing cysteine protease Prp.

The protein is Large ribosomal subunit protein bL27 of Geobacillus kaustophilus (strain HTA426).